Reading from the N-terminus, the 87-residue chain is uncharacterized protein (87 aa).

The chain crosses the membrane as a helical span at residues 42–62; the sequence is LADALYSAGSAAFTIAASLVA.

It belongs to the SPP1 holin family.

The protein resides in the membrane. This is an uncharacterized protein from Bacillus licheniformis.